The following is a 433-amino-acid chain: MSVFKGEVTSLPPDKSISHRAALIASLSDGETEIMNFSAGFDNQSTLGVLQACGIPVRQEEVPGPWGTAILRVVIKSKGLWSLTPPSAPLQCNNSGSTMRMFSGILAGQPFQSELVGDASLLKRPMRRIADPLIQMGAGVSLSPIGTAPVVITGSKDLHAIDYRLPVASAQVKSLVAFAGLHAEGETRIYEPLSSRNHTELMLGLEPRVENEERVIVVPGRRQREARPFQIPADPSAACFIVSLGLLARGSEIMIRDVCLNPTRAAFLDILIRAGAAVTIENRRTVGGESIGDILVEGTRDMEPLVISDPQEVAIAIDELPMLGVLSAFATERFELMNAGELRTKESDRIEALALNLERLGFVCHQEPGGLSVTGRKGRPSGPVVVECFDDHRIAMSFAVASKACGEDIELSDREVAGVSFPNFFSLLDALEV.

3-phosphoshikimate is bound by residues Lys-15, Ser-16, and Arg-20. Phosphoenolpyruvate is bound at residue Lys-15. Residues Gly-96 and Arg-124 each contribute to the phosphoenolpyruvate site. 5 residues coordinate 3-phosphoshikimate: Ser-169, Gln-171, Ser-195, Asp-318, and Lys-345. Gln-171 is a binding site for phosphoenolpyruvate. The active-site Proton acceptor is the Asp-318. The phosphoenolpyruvate site is built by Arg-349 and Arg-393.

The protein belongs to the EPSP synthase family. As to quaternary structure, monomer.

It localises to the cytoplasm. It catalyses the reaction 3-phosphoshikimate + phosphoenolpyruvate = 5-O-(1-carboxyvinyl)-3-phosphoshikimate + phosphate. It functions in the pathway metabolic intermediate biosynthesis; chorismate biosynthesis; chorismate from D-erythrose 4-phosphate and phosphoenolpyruvate: step 6/7. Functionally, catalyzes the transfer of the enolpyruvyl moiety of phosphoenolpyruvate (PEP) to the 5-hydroxyl of shikimate-3-phosphate (S3P) to produce enolpyruvyl shikimate-3-phosphate and inorganic phosphate. The sequence is that of 3-phosphoshikimate 1-carboxyvinyltransferase from Chlorobium luteolum (strain DSM 273 / BCRC 81028 / 2530) (Pelodictyon luteolum).